The sequence spans 303 residues: Mevalonate kinase (303 aa).

ATP is bound at residue 90-100 (PAGSGLGSSAA). The active-site Proton acceptor is the aspartate 141.

The protein belongs to the GHMP kinase family. Mevalonate kinase subfamily. Homodimer. Mg(2+) is required as a cofactor.

It localises to the cytoplasm. It carries out the reaction (R)-mevalonate + ATP = (R)-5-phosphomevalonate + ADP + H(+). It functions in the pathway isoprenoid biosynthesis; isopentenyl diphosphate biosynthesis via mevalonate pathway; isopentenyl diphosphate from (R)-mevalonate: step 1/3. Catalyzes the phosphorylation of (R)-mevalonate (MVA) to (R)-mevalonate 5-phosphate (MVAP). Functions in the mevalonate (MVA) pathway leading to isopentenyl diphosphate (IPP), a key precursor for the biosynthesis of isoprenoid compounds such as archaeal membrane lipids. This Methanothermobacter thermautotrophicus (strain ATCC 29096 / DSM 1053 / JCM 10044 / NBRC 100330 / Delta H) (Methanobacterium thermoautotrophicum) protein is Mevalonate kinase.